The following is a 65-amino-acid chain: Putative antitoxin PF2058 (65 aa).

It belongs to the UPF0165 family.

In terms of biological role, possibly the antitoxin component of a type II toxin-antitoxin (TA) system. This Pyrococcus furiosus (strain ATCC 43587 / DSM 3638 / JCM 8422 / Vc1) protein is Putative antitoxin PF2058.